We begin with the raw amino-acid sequence, 229 residues long: NAD-dependent protein deacetylase (229 aa).

Residues 1-229 (MNKLNEALKK…SDAVKVFEEI (229 aa)) form the Deacetylase sirtuin-type domain. NAD(+)-binding residues include Ala20, Arg32, Gln96, Ile98, Asp99, His114, Thr181, Ser182, Asn205, and Val223. 2 residues coordinate nicotinamide: Ile98 and Asp99. Catalysis depends on His114, which acts as the Proton acceptor.

Belongs to the sirtuin family. Class U subfamily.

It is found in the cytoplasm. The enzyme catalyses N(6)-acetyl-L-lysyl-[protein] + NAD(+) + H2O = 2''-O-acetyl-ADP-D-ribose + nicotinamide + L-lysyl-[protein]. NAD-dependent protein deacetylase which modulates the activities of several enzymes which are inactive in their acetylated form. The chain is NAD-dependent protein deacetylase from Listeria monocytogenes serovar 1/2a (strain ATCC BAA-679 / EGD-e).